The following is a 212-amino-acid chain: Thylakoid membrane protein slr1949 (212 aa).

Residues 109 to 131 (WVQDGLLLLLALGLCGISGYRLW) traverse the membrane as a helical segment. The stretch at 180 to 212 (PNRRQRKQYETRLQALRQSAAKMKAKTQKAKAL) forms a coiled coil.

The protein resides in the cellular thylakoid membrane. The sequence is that of Thylakoid membrane protein slr1949 from Synechocystis sp. (strain ATCC 27184 / PCC 6803 / Kazusa).